The sequence spans 400 residues: Aspartate aminotransferase (400 aa).

Residues G37, W126, and N176 each coordinate L-aspartate. At K238 the chain carries N6-(pyridoxal phosphate)lysine. R367 contacts L-aspartate.

It belongs to the class-I pyridoxal-phosphate-dependent aminotransferase family. Homodimer. Pyridoxal 5'-phosphate serves as cofactor.

It is found in the cytoplasm. The catalysed reaction is L-aspartate + 2-oxoglutarate = oxaloacetate + L-glutamate. In terms of biological role, catalyzes the reversible conversion of aspartate and 2-oxoglutarate to glutamate and oxaloacetate. Has very weak prephenate aminotransferase activity. The chain is Aspartate aminotransferase from Musicola paradisiaca (strain Ech703) (Dickeya paradisiaca).